A 932-amino-acid chain; its full sequence is MYCBP-associated protein (932 aa).

2 disordered regions span residues 1–39 (MMKK…PVSN) and 165–187 (EEPK…PPQH). Over residues 165-178 (EEPKPKPPKEEERP) the composition is skewed to basic and acidic residues. Residue S559 is modified to Phosphoserine. A Phosphothreonine modification is found at T560. Phosphoserine is present on S566. Residues 789-886 (LPDEQGQKSP…TAPSQEPIDP (98 aa)) form a disordered region. Positions 795 to 806 (QKSPPVTESKVT) are enriched in polar residues. The span at 810 to 869 (AGKEDRRGGAQEKKQLGTKDKDDKRGSKTPGKEDRPNSKKLKPKDDKKVVKSASRDRLLS) shows a compositional bias: basic and acidic residues.

In terms of assembly, interacts with MYCBP.

The protein localises to the cytoplasm. The protein resides in the membrane. Functionally, may play a role in spermatogenesis. May be involved in synaptic processes. The chain is MYCBP-associated protein from Mus musculus (Mouse).